We begin with the raw amino-acid sequence, 550 residues long: Dihydroxy-acid dehydratase (550 aa).

Asp-81 contacts Mg(2+). A [2Fe-2S] cluster-binding site is contributed by Cys-122. 2 residues coordinate Mg(2+): Asp-123 and Lys-124. Lys-124 carries the post-translational modification N6-carboxylysine. [2Fe-2S] cluster is bound at residue Cys-194. Glu-442 lines the Mg(2+) pocket. Residue Ser-467 is the Proton acceptor of the active site.

The protein belongs to the IlvD/Edd family. As to quaternary structure, homodimer. It depends on [2Fe-2S] cluster as a cofactor. Requires Mg(2+) as cofactor.

The catalysed reaction is (2R)-2,3-dihydroxy-3-methylbutanoate = 3-methyl-2-oxobutanoate + H2O. It carries out the reaction (2R,3R)-2,3-dihydroxy-3-methylpentanoate = (S)-3-methyl-2-oxopentanoate + H2O. It participates in amino-acid biosynthesis; L-isoleucine biosynthesis; L-isoleucine from 2-oxobutanoate: step 3/4. Its pathway is amino-acid biosynthesis; L-valine biosynthesis; L-valine from pyruvate: step 3/4. Functionally, functions in the biosynthesis of branched-chain amino acids. Catalyzes the dehydration of (2R,3R)-2,3-dihydroxy-3-methylpentanoate (2,3-dihydroxy-3-methylvalerate) into 2-oxo-3-methylpentanoate (2-oxo-3-methylvalerate) and of (2R)-2,3-dihydroxy-3-methylbutanoate (2,3-dihydroxyisovalerate) into 2-oxo-3-methylbutanoate (2-oxoisovalerate), the penultimate precursor to L-isoleucine and L-valine, respectively. In Methanoregula boonei (strain DSM 21154 / JCM 14090 / 6A8), this protein is Dihydroxy-acid dehydratase.